Here is a 200-residue protein sequence, read N- to C-terminus: Ribonuclease HII (200 aa).

The RNase H type-2 domain maps to 1-200 (MRYGGVDEAG…EINKKLTDFI (200 aa)). Asp-7, Glu-8, and Asp-99 together coordinate a divalent metal cation.

This sequence belongs to the RNase HII family. It depends on Mn(2+) as a cofactor. Mg(2+) serves as cofactor.

Its subcellular location is the cytoplasm. It carries out the reaction Endonucleolytic cleavage to 5'-phosphomonoester.. Endonuclease that specifically degrades the RNA of RNA-DNA hybrids. This Nanoarchaeum equitans (strain Kin4-M) protein is Ribonuclease HII.